A 297-amino-acid polypeptide reads, in one-letter code: Virulence genes transcriptional activator (297 aa).

The HTH lysR-type domain occupies 1–61 (MDFLINKKLK…IRKNGTLIPT (61 aa)). Positions 21-40 (FSIATSVLYITRTPLSRVIS) form a DNA-binding region, H-T-H motif.

Belongs to the LysR transcriptional regulatory family.

Its subcellular location is the cytoplasm. Positive regulator for the plasmid-encoded virulence factors SpvA, SpvB, and SpvC. In Salmonella typhimurium (strain LT2 / SGSC1412 / ATCC 700720), this protein is Virulence genes transcriptional activator (mkaC).